Here is a 319-residue protein sequence, read N- to C-terminus: Acetyl-coenzyme A carboxylase carboxyl transferase subunit alpha (319 aa).

Positions 39-293 (RLQKKSNDLT…KAVLEKQLHE (255 aa)) constitute a CoA carboxyltransferase C-terminal domain.

The protein belongs to the AccA family. As to quaternary structure, acetyl-CoA carboxylase is a heterohexamer composed of biotin carboxyl carrier protein (AccB), biotin carboxylase (AccC) and two subunits each of ACCase subunit alpha (AccA) and ACCase subunit beta (AccD).

The protein resides in the cytoplasm. It carries out the reaction N(6)-carboxybiotinyl-L-lysyl-[protein] + acetyl-CoA = N(6)-biotinyl-L-lysyl-[protein] + malonyl-CoA. It participates in lipid metabolism; malonyl-CoA biosynthesis; malonyl-CoA from acetyl-CoA: step 1/1. Functionally, component of the acetyl coenzyme A carboxylase (ACC) complex. First, biotin carboxylase catalyzes the carboxylation of biotin on its carrier protein (BCCP) and then the CO(2) group is transferred by the carboxyltransferase to acetyl-CoA to form malonyl-CoA. The chain is Acetyl-coenzyme A carboxylase carboxyl transferase subunit alpha from Neisseria meningitidis serogroup A / serotype 4A (strain DSM 15465 / Z2491).